The sequence spans 334 residues: MLRLHWLALLVLLLPMAAAQLRPEPELDAQWDLWKRTIQKAVQRQGGRNVPEVDLGEEPEVHRCPQRGARLGKHSFQLAMNYLGDMTSEEVVRTMTGLRVPRSRPRPNGTLYVPDWSSRAPAAVDWRRKGYVTPVKDQGQCGSCWAFSSVGALEGQLKRRTGKLLSLSPQNLVYCVSNNNGCGGGYMTNAFEYVRLNRGIDSEDAYPYIGQDESCMYSPTGKAAKCRGYREIPEDNEKALKRAVARIGPVSVGIDASLPSFQFYSRGVYYDTGCNPENINHAVLAVGYGAQKGTKHWIIKNSWGTEWGNKGYVLLARNMKQTCGIANLASFPKM.

The first 19 residues, 1 to 19 (MLRLHWLALLVLLLPMAAA), serve as a signal peptide directing secretion. A propeptide spans 20-119 (QLRPEPELDA…TLYVPDWSSR (100 aa)) (activation peptide). A glycan (N-linked (GlcNAc...) asparagine) is linked at Asn108. 3 disulfides stabilise this stretch: Cys141-Cys182, Cys175-Cys215, and Cys274-Cys323. Cys144 is a catalytic residue. Active-site residues include His281 and Asn301.

Belongs to the peptidase C1 family.

It carries out the reaction Broad proteolytic activity. With small-molecule substrates and inhibitors, the major determinant of specificity is P2, which is preferably Leu, Met &gt; Phe, and not Arg.. Its function is as follows. Closely involved in osteoclastic bone resorption and may participate partially in the disorder of bone remodeling. Displays potent endoprotease activity against fibrinogen at acid pH. May play an important role in extracellular matrix degradation. The polypeptide is Cathepsin K (CTSK) (Gallus gallus (Chicken)).